The sequence spans 739 residues: Phosphoribosylformylglycinamidine synthase subunit PurL (739 aa).

Residue H53 is part of the active site. Residues Y56 and K95 each contribute to the ATP site. E97 contacts Mg(2+). Residues 98–101 (SHNH) and R120 each bind substrate. H99 (proton acceptor) is an active-site residue. Residue D121 coordinates Mg(2+). Q244 serves as a coordination point for substrate. D274 contributes to the Mg(2+) binding site. 318 to 320 (ESQ) lines the substrate pocket. ATP contacts are provided by D501 and G538. Mg(2+) is bound at residue N539. S541 lines the substrate pocket.

The protein belongs to the FGAMS family. As to quaternary structure, monomer. Part of the FGAM synthase complex composed of 1 PurL, 1 PurQ and 2 PurS subunits.

The protein localises to the cytoplasm. It carries out the reaction N(2)-formyl-N(1)-(5-phospho-beta-D-ribosyl)glycinamide + L-glutamine + ATP + H2O = 2-formamido-N(1)-(5-O-phospho-beta-D-ribosyl)acetamidine + L-glutamate + ADP + phosphate + H(+). Its pathway is purine metabolism; IMP biosynthesis via de novo pathway; 5-amino-1-(5-phospho-D-ribosyl)imidazole from N(2)-formyl-N(1)-(5-phospho-D-ribosyl)glycinamide: step 1/2. In terms of biological role, part of the phosphoribosylformylglycinamidine synthase complex involved in the purines biosynthetic pathway. Catalyzes the ATP-dependent conversion of formylglycinamide ribonucleotide (FGAR) and glutamine to yield formylglycinamidine ribonucleotide (FGAM) and glutamate. The FGAM synthase complex is composed of three subunits. PurQ produces an ammonia molecule by converting glutamine to glutamate. PurL transfers the ammonia molecule to FGAR to form FGAM in an ATP-dependent manner. PurS interacts with PurQ and PurL and is thought to assist in the transfer of the ammonia molecule from PurQ to PurL. In Listeria monocytogenes serotype 4b (strain F2365), this protein is Phosphoribosylformylglycinamidine synthase subunit PurL.